Consider the following 434-residue polypeptide: MTNPAPIEAPLPKGVTDFLPEKADKIGYIEGKIRRVFELWGFRRIITPLLEFQDVMAAGLGEDLKERTFRFDDRQTGKLLAIPSDITPQVARIVATRMRGCPLPHRLYYIGRVLRHVELQSGRSRETFQAGVELIGLDSPEADAEMVAMAVEILKGLGFEEFKVDLGHTGFIRGVMAASGLGGDARRRLQEAVGKKDSSAVRAILETEPVADRIKEELAALPRLFGGREVLAEAARVATSDSSRRALDNIAQVLDILDIHGVSDHLTLDLGEIRGLDYHSGLTFEGFVTGIGEAVCSGGRYDNLTQRYGYPAPATGFAFNILALLNALEKRPDVEASKTRDLLIFNLKDDRREALEIAQHLRALGYSTARDIIHRDFNDSLDYARRMNILRMMVIGGDYCAADEAYVVRVADKRGTAVKKADLMRNDFSLNTLP.

The protein belongs to the class-II aminoacyl-tRNA synthetase family. HisZ subfamily. As to quaternary structure, heteromultimer composed of HisG and HisZ subunits.

The protein localises to the cytoplasm. The protein operates within amino-acid biosynthesis; L-histidine biosynthesis; L-histidine from 5-phospho-alpha-D-ribose 1-diphosphate: step 1/9. In terms of biological role, required for the first step of histidine biosynthesis. May allow the feedback regulation of ATP phosphoribosyltransferase activity by histidine. This is ATP phosphoribosyltransferase regulatory subunit from Geobacter metallireducens (strain ATCC 53774 / DSM 7210 / GS-15).